Consider the following 92-residue polypeptide: Small ribosomal subunit protein uS19 (92 aa).

The protein belongs to the universal ribosomal protein uS19 family.

Its function is as follows. Protein S19 forms a complex with S13 that binds strongly to the 16S ribosomal RNA. This is Small ribosomal subunit protein uS19 from Psychromonas ingrahamii (strain DSM 17664 / CCUG 51855 / 37).